Reading from the N-terminus, the 674-residue chain is Glutaminase kidney isoform, mitochondrial (674 aa).

The N-terminal 54 residues, 1–54 (MMRLRGSAMLRELLLRPPAAVGGVLRRTQPLGTLCRRPRGGSRPAAGLVAAARL), are a transit peptide targeting the mitochondrion. Positions 56–123 (PWWGGGGRAK…PGETDAFGNS (68 aa)) are disordered. Positions 58-71 (WGGGGRAKGPGSGG) are enriched in gly residues. Residues 89 to 101 (PPQQQQQQQQQPG) show a composition bias toward low complexity. 2 positions are modified to N6-succinyllysine: Lys-135 and Lys-169. Substrate is bound at residue Ser-291. Position 316 is an N6-acetyllysine (Lys-316). The highly mobile activation loop stretch occupies residues 320-327 (GLRFNKLF). Residues Asn-340, Glu-386, Asn-393, Tyr-419, Tyr-471, and Val-489 each coordinate substrate. ANK repeat units lie at residues 590-619 (DSRT…VNPF) and 624-653 (WNNT…QYTP). The disordered stretch occupies residues 652-674 (TPQGDSDDGKENQTVHKNLDGLL). Ser-657 is modified (phosphoserine). Residues 658–674 (DDGKENQTVHKNLDGLL) show a composition bias toward basic and acidic residues.

The protein belongs to the glutaminase family. Homotetramer, dimer of dimers. Tetramer composed of 68 and 65 kDa peptides in a 1:3 ratio. Can assemble into higher oligomers (in vitro), but the physiological significance of this is not clear. Interacts with RAF1 and MAP2K2. Interacts with ATCAY; the interaction is direct and may control GLS localization, negatively regulating its activity. Post-translationally, synthesized as a 74-kDa cytosolic precursor which is proteolytically processed by the mitochondrial-processing peptidase (MPP) via a 72-kDa intermediate to yield the mature mitochondrial 68- and 65-kDa subunits. Kidney, brain, and intestine.

The protein localises to the mitochondrion. The protein resides in the cytoplasm. It is found in the cytosol. Its subcellular location is the mitochondrion matrix. The catalysed reaction is L-glutamine + H2O = L-glutamate + NH4(+). Its activity is regulated as follows. Enzyme activity is increased by phosphate, due to increased kcat and increased substrate affinity. In terms of biological role, catalyzes the first reaction in the primary pathway for the renal catabolism of glutamine. Plays a role in maintaining acid-base homeostasis. Regulates the levels of the neurotransmitter glutamate, the main excitatory neurotransmitter in the brain. In Rattus norvegicus (Rat), this protein is Glutaminase kidney isoform, mitochondrial (Gls).